Here is a 1037-residue protein sequence, read N- to C-terminus: Ephrin type-A receptor 5 (1037 aa).

A signal peptide spans 1–24; the sequence is MRGSGPRGAGRRRPPSGGGDTPIT. The disordered stretch occupies residues 1 to 24; the sequence is MRGSGPRGAGRRRPPSGGGDTPIT. The Extracellular segment spans residues 25 to 573; it reads PASLAGCYSA…AASSDQSQIP (549 aa). The Eph LBD domain occupies 60-238; it reads EVNLLDSRTV…YYKKCPSVVR (179 aa). Asn-264, Asn-299, Asn-369, Asn-423, Asn-436, and Asn-461 each carry an N-linked (GlcNAc...) asparagine glycan. Fibronectin type-III domains follow at residues 357–467 and 468–562; these read PPSA…TNQA and APSP…TTPV. Residues 574–594 form a helical membrane-spanning segment; that stretch reads VIAVSVTVGVILLAVVIGVLL. At 595-1037 the chain is on the cytoplasmic side; the sequence is SGSCCECGCG…VQLVNGMVPL (443 aa). Phosphotyrosine; by autocatalysis is present on residues Tyr-650 and Tyr-656. Residues 675–936 enclose the Protein kinase domain; sequence ITIERVIGAG…EIVNMLDKLI (262 aa). ATP is bound by residues 681 to 689 and Lys-707; that span reads IGAGEFGEV. Asp-800 acts as the Proton acceptor in catalysis. Phosphotyrosine; by autocatalysis occurs at positions 833 and 982. Residues 965–1029 form the SAM domain; it reads GAYRSVGEWL…MNSLQEMKVQ (65 aa). Positions 1035–1037 match the PDZ-binding motif; that stretch reads VPL.

It belongs to the protein kinase superfamily. Tyr protein kinase family. Ephrin receptor subfamily. As to quaternary structure, heterotetramer upon binding of the ligand. The heterotetramer is composed of an ephrin dimer and a receptor dimer. Oligomerization is probably required to induce biological responses. Interacts (via SAM domain) with SAMD5 (via SAM domain). In terms of processing, phosphorylated. Phosphorylation is stimulated by the ligand EFNA5. Dephosphorylation upon stimulation by glucose, inhibits EPHA5 forward signaling and results in insulin secretion. In terms of tissue distribution, almost exclusively expressed in the nervous system in cortical neurons, cerebellar Purkinje cells and pyramidal neurons within the cortex and hippocampus. Display an increasing gradient of expression from the forebrain to hindbrain and spinal cord.

It localises to the cell membrane. It is found in the cell projection. The protein resides in the axon. Its subcellular location is the dendrite. It carries out the reaction L-tyrosyl-[protein] + ATP = O-phospho-L-tyrosyl-[protein] + ADP + H(+). Functionally, receptor tyrosine kinase which binds promiscuously GPI-anchored ephrin-A family ligands residing on adjacent cells, leading to contact-dependent bidirectional signaling into neighboring cells. The signaling pathway downstream of the receptor is referred to as forward signaling while the signaling pathway downstream of the ephrin ligand is referred to as reverse signaling. Among GPI-anchored ephrin-A ligands, EFNA5 most probably constitutes the cognate/functional ligand for EPHA5. Functions as an axon guidance molecule during development and may be involved in the development of the retinotectal, entorhino-hippocampal and hippocamposeptal pathways. Together with EFNA5 plays also a role in synaptic plasticity in adult brain through regulation of synaptogenesis. In addition to its function in the nervous system, the interaction of EPHA5 with EFNA5 mediates communication between pancreatic islet cells to regulate glucose-stimulated insulin secretion. In Homo sapiens (Human), this protein is Ephrin type-A receptor 5 (EPHA5).